The primary structure comprises 79 residues: Succinate dehydrogenase assembly factor 1, mitochondrial (79 aa).

It belongs to the complex I LYR family. SDHAF1 subfamily. As to quaternary structure, interacts with SDH2 within an SDH1-SDH2 subcomplex.

Its subcellular location is the mitochondrion matrix. Functionally, plays an essential role in the assembly of succinate dehydrogenase (SDH), an enzyme complex (also referred to as respiratory complex II) that is a component of both the tricarboxylic acid (TCA) cycle and the mitochondrial electron transport chain, and which couples the oxidation of succinate to fumarate with the reduction of ubiquinone (coenzyme Q) to ubiquinol. Promotes maturation of the iron-sulfur protein subunit SDH2 of the SDH catalytic dimer, protecting it from the deleterious effects of oxidants. Acts together with SDHAF3 (SDH7). This is Succinate dehydrogenase assembly factor 1, mitochondrial from Saccharomyces cerevisiae (strain YJM789) (Baker's yeast).